A 149-amino-acid polypeptide reads, in one-letter code: Deoxyuridine 5'-triphosphate nucleotidohydrolase (149 aa).

Residues 68 to 70 (RSG), asparagine 81, 85 to 87 (LID), and methionine 95 each bind substrate.

It belongs to the dUTPase family. Mg(2+) is required as a cofactor.

It catalyses the reaction dUTP + H2O = dUMP + diphosphate + H(+). It functions in the pathway pyrimidine metabolism; dUMP biosynthesis; dUMP from dCTP (dUTP route): step 2/2. Its function is as follows. This enzyme is involved in nucleotide metabolism: it produces dUMP, the immediate precursor of thymidine nucleotides and it decreases the intracellular concentration of dUTP so that uracil cannot be incorporated into DNA. The sequence is that of Deoxyuridine 5'-triphosphate nucleotidohydrolase from Bordetella pertussis (strain Tohama I / ATCC BAA-589 / NCTC 13251).